Here is a 308-residue protein sequence, read N- to C-terminus: MTSTSGKPKMEKFGLQTDKSARVILFRNGDRYHVEGVHCLVHSSKFKTFDQLKLEFSKKVGLFTGNVQKVYSMDKKRIQDIKDFVDGHHYICCGAEPLNTEVIPKGIQDIFGKAEVSDQDDEPKPSKPFVSSVPPPPTPTPTSSSGTTTTSQPTLSASPSVSSAQSPKKPVVSAYKESAVHSIDKFSVQTEKAKVIMCFRNGDRYHSGERVTVHSTKFKTYDQLKEQLSKQVKLPTGPVRKLYLASSGKLVKTMEEIIDGEYYVCAGGETLNPLDFSPTLSEHVKQKKLQEQQQQASEQQKPQEQEIF.

Residues Ala-21–Pro-104 form the Doublecortin 1 domain. Positions Glu-115–Pro-167 are disordered. Over residues Pro-141 to Pro-167 the composition is skewed to low complexity. In terms of domain architecture, Doublecortin 2 spans Lys-194–Ser-277. Residues Glu-282–Phe-308 are disordered. Positions Glu-291–Gln-300 are enriched in low complexity.

As to quaternary structure, interacts with lis1.

Its subcellular location is the cytoplasm. The protein localises to the cytoskeleton. In terms of biological role, has a cytoskeleton-independent function in chemotactic signaling during development. The chain is Protein doublecortin (dcx) from Dictyostelium discoideum (Social amoeba).